A 71-amino-acid chain; its full sequence is Palustrin-Ca (71 aa).

The signal sequence occupies residues 1 to 22 (MFTLKKSLLLLFFLGTISLSLC). The propeptide occupies 23 to 40 (EQERDADGDEGEVEEVKR). A disulfide bridge connects residues Cys-63 and Cys-69.

Belongs to the frog skin active peptide (FSAP) family. Brevinin subfamily. Expressed by the skin glands.

It localises to the secreted. Its subcellular location is the target cell membrane. Antibacterial peptide with amphipathic alpha-helical structure that exhibits potent broad-spectrum activity against Gram-positive and -negative bacteria. It is active against Listeria ATCC 54004 (MIC=30 ug/ml), S.aureus ATCC 25923 (MIC=7.8 ug/ml), S.suis 2 CVCC 606 (MIC=31.25 ug/ml), B.subtilis ADB403 (30 ug/ml), K.pneumoniae ATCC 700603 (MIC=60 ug/ml) and P.aeruginosa ATCC 227853 (MIC=30 ug/ml). Does not show activity against Salmonella ATCC 20020 and the fungus Candida albicans. Is also cytotoxic to HeLa cells at high concentrations. In addition, shows a strong antitumor activity but only a little hemolytic activity. Despite the presence of a Gly residue at position 10, this alpha-helical peptide remains relatively rigid, not exhibiting any significant flexibility during the molecular dynamics simulation. The peptide shows a preference for a position parallel to the target membrane that suggests it exerts its antimicrobial activity through a non-pore-forming mechanism of action, such as the carpet model or the interfacial activity model. This is Palustrin-Ca from Aquarana catesbeiana (American bullfrog).